We begin with the raw amino-acid sequence, 172 residues long: Large ribosomal subunit protein uL10 (172 aa).

It belongs to the universal ribosomal protein uL10 family. In terms of assembly, part of the ribosomal stalk of the 50S ribosomal subunit. The N-terminus interacts with L11 and the large rRNA to form the base of the stalk. The C-terminus forms an elongated spine to which L12 dimers bind in a sequential fashion forming a multimeric L10(L12)X complex.

Forms part of the ribosomal stalk, playing a central role in the interaction of the ribosome with GTP-bound translation factors. The sequence is that of Large ribosomal subunit protein uL10 from Rhizobium meliloti (strain 1021) (Ensifer meliloti).